The chain runs to 341 residues: Acetylpolyamine amidohydrolase (341 aa).

The Proton donor/acceptor role is filled by His157. The Zn(2+) site is built by Asp192, His194, and Asp281.

Belongs to the histone deacetylase family. In terms of assembly, homodimer. Zn(2+) is required as a cofactor.

It catalyses the reaction N-acetylputrescine + H2O = putrescine + acetate. The catalysed reaction is N-acetylcadaverine + H2O = cadaverine + acetate. Its pathway is amine and polyamine metabolism. In terms of biological role, involved in polyamine metabolism. Catalyzes the deacetylation of various acetylated polyamines such as N-acetylputrescine and N-acetylcadaverine. This chain is Acetylpolyamine amidohydrolase, found in Burkholderia pseudomallei (strain 1710b).